We begin with the raw amino-acid sequence, 1405 residues long: DNA-directed RNA polymerase subunit beta' (1405 aa).

Zn(2+) contacts are provided by Cys70, Cys72, Cys85, and Cys88. Residues Asp460, Asp462, and Asp464 each coordinate Mg(2+). Zn(2+)-binding residues include Cys814, Cys888, Cys895, and Cys898.

Belongs to the RNA polymerase beta' chain family. The RNAP catalytic core consists of 2 alpha, 1 beta, 1 beta' and 1 omega subunit. When a sigma factor is associated with the core the holoenzyme is formed, which can initiate transcription. Mg(2+) is required as a cofactor. It depends on Zn(2+) as a cofactor.

The catalysed reaction is RNA(n) + a ribonucleoside 5'-triphosphate = RNA(n+1) + diphosphate. In terms of biological role, DNA-dependent RNA polymerase catalyzes the transcription of DNA into RNA using the four ribonucleoside triphosphates as substrates. This is DNA-directed RNA polymerase subunit beta' from Shewanella oneidensis (strain ATCC 700550 / JCM 31522 / CIP 106686 / LMG 19005 / NCIMB 14063 / MR-1).